The primary structure comprises 180 residues: MSRGRADTAGDCSKNGRRSRILHYLMAIYLLNGLPGGEYARFIKIARLLDVSPSTVSIMTRRLQMKGLVELIPNMGVRLTEQGLKILSNYLWKSAILEVLLARAGVDIDNCRGMGLRMAEGLSDEDAWILYKVLGEPKYCPHKKPIIPPDEINAENARQIALCCGISILQIPNNRLQPPS.

Residues 17 to 80 (RRSRILHYLM…LIPNMGVRLT (64 aa)) form the HTH dtxR-type domain.

This sequence belongs to the DtxR/MntR family.

This is an uncharacterized protein from Aeropyrum pernix (strain ATCC 700893 / DSM 11879 / JCM 9820 / NBRC 100138 / K1).